A 70-amino-acid polypeptide reads, in one-letter code: Large ribosomal subunit protein bL31 (70 aa).

4 residues coordinate Zn(2+): Cys16, Cys18, Cys37, and Cys40.

The protein belongs to the bacterial ribosomal protein bL31 family. Type A subfamily. Part of the 50S ribosomal subunit. Zn(2+) is required as a cofactor.

In terms of biological role, binds the 23S rRNA. The sequence is that of Large ribosomal subunit protein bL31 from Pasteurella multocida (strain Pm70).